The sequence spans 203 residues: Probable GTP-binding protein EngB (203 aa).

One can recognise an EngB-type G domain in the interval 24–199; the sequence is DGSEVAFAGR…HTVIETWLGL (176 aa). Residues 32–39, 59–63, 77–80, 144–147, and 178–180 each bind GTP; these read GRSNAGKS, GRTQQ, DLPG, TKAD, and FSS. Ser-39 and Thr-61 together coordinate Mg(2+).

The protein belongs to the TRAFAC class TrmE-Era-EngA-EngB-Septin-like GTPase superfamily. EngB GTPase family. Mg(2+) is required as a cofactor.

In terms of biological role, necessary for normal cell division and for the maintenance of normal septation. The sequence is that of Probable GTP-binding protein EngB from Xylella fastidiosa (strain Temecula1 / ATCC 700964).